The chain runs to 188 residues: dTTP/UTP pyrophosphatase (188 aa).

Catalysis depends on D70, which acts as the Proton acceptor.

This sequence belongs to the Maf family. YhdE subfamily. The cofactor is a divalent metal cation.

It localises to the cytoplasm. It catalyses the reaction dTTP + H2O = dTMP + diphosphate + H(+). It carries out the reaction UTP + H2O = UMP + diphosphate + H(+). Functionally, nucleoside triphosphate pyrophosphatase that hydrolyzes dTTP and UTP. May have a dual role in cell division arrest and in preventing the incorporation of modified nucleotides into cellular nucleic acids. The protein is dTTP/UTP pyrophosphatase of Clostridium beijerinckii (strain ATCC 51743 / NCIMB 8052) (Clostridium acetobutylicum).